Consider the following 289-residue polypeptide: tRNA pseudouridine synthase B (289 aa).

Aspartate 38 acts as the Nucleophile in catalysis.

This sequence belongs to the pseudouridine synthase TruB family. Type 1 subfamily.

The enzyme catalyses uridine(55) in tRNA = pseudouridine(55) in tRNA. Functionally, responsible for synthesis of pseudouridine from uracil-55 in the psi GC loop of transfer RNAs. The protein is tRNA pseudouridine synthase B of Acaryochloris marina (strain MBIC 11017).